A 1304-amino-acid polypeptide reads, in one-letter code: Zinc finger CCCH domain-containing protein 4 (1304 aa).

Over residues 1–33 (MEAVPGTPPPPPSESPPPPSPPPPSTPSPPPCS) the composition is skewed to pro residues. Residues 1–387 (MEAVPGTPPP…SDHDKPHQQS (387 aa)) are disordered. The span at 53 to 73 (DREDGELEEGELEDDGAEEVQ) shows a compositional bias: acidic residues. A compositionally biased stretch (basic and acidic residues) spans 80–99 (ERSRKEKGEKHHSDSEEEKS). Residues Ser92 and Ser94 each carry the phosphoserine modification. Residues 94-128 (SEEEKSHRRLKRKRKKEREKEKRRSKKRRKSKHKR) are a coiled coil. Positions 100–130 (HRRLKRKRKKEREKEKRRSKKRRKSKHKRHA) are enriched in basic residues. A compositionally biased stretch (acidic residues) spans 135-144 (DFSDFSDDSD). Tyr155 carries the phosphotyrosine modification. Polar residues predominate over residues 165-174 (SHQQYSSSHN). The segment covering 194–218 (EDYENEQYGEYEGDEEEDMGKEDYD) has biased composition (acidic residues). Over residues 219-235 (DFTKELNQYRRAKEGSS) the composition is skewed to basic and acidic residues. The span at 238-251 (RGSRGRGRGYRGRG) shows a compositional bias: basic residues. Gly residues predominate over residues 252–264 (SRGGSRGRGMGRG). The span at 277-303 (PEDEEDLYEEEIEYGESEEPMGDDDYD) shows a compositional bias: acidic residues. The span at 304–320 (DYSKELNQYRRSKDSRG) shows a compositional bias: basic and acidic residues. The span at 322-346 (GLSRGRGRGSRGGRGKGMGRGRGRG) shows a compositional bias: basic residues. Over residues 357-368 (NDDEDFYDDDMG) the composition is skewed to acidic residues. Positions 376–387 (RRSDHDKPHQQS) are enriched in basic and acidic residues. 3 C3H1-type zinc fingers span residues 389-416 (KKGK…HDIE), 418-445 (PKKR…HGDF), and 446-469 (PCKL…HDPL). Residues 485–495 (AEAGAEDEKEV) show a composition bias toward acidic residues. The segment at 485-567 (AEAGAEDEKE…LPTHEPLSPQ (83 aa)) is disordered. Pro residues-rich tracts occupy residues 506–529 (LPKP…PAPT) and 538–556 (GGPP…PPQM). At Arg599 the chain carries Asymmetric dimethylarginine. 3 disordered regions span residues 601–691 (PGPG…DSPH), 719–970 (PGLV…SHIK), and 994–1304 (LPIP…PFCQ). The span at 603 to 622 (PGGPSGPMGPGPNMGPPGPM) shows a compositional bias: pro residues. The span at 628 to 660 (PDMHPDMHPDMHPDMHPDMHPDMHPDMHPDMHP) shows a compositional bias: basic and acidic residues. A compositionally biased stretch (pro residues) spans 669-683 (NPGPPMGPGGPPMMP). Residues 778–809 (ALYLRIQQKQQEEERARRLAESSKQDRENEEG) are a coiled coil. The segment covering 787 to 804 (QQEEERARRLAESSKQDR) has biased composition (basic and acidic residues). 2 positions are modified to phosphoserine: Ser816 and Ser817. The segment covering 824-852 (SSVTSILKTLRQQTSSRPQASVGEPSSSG) has biased composition (polar residues). Positions 869-884 (SDPRLSRDPRLSRHAE) are enriched in basic and acidic residues. Phosphoserine occurs at positions 913, 916, and 917. The span at 913 to 929 (SLHSSPAGPSSSKGQPP) shows a compositional bias: low complexity. Positions 994 to 1005 (LPIPKQDVPPVP) are enriched in pro residues. Polar residues-rich tracts occupy residues 1028 to 1044 (NTRQ…SGSN) and 1058 to 1067 (VNVNTPGQSE). Residues 1068–1085 (KPSDPRVRKTPTDPRLQK) show a composition bias toward basic and acidic residues. Low complexity-rich tracts occupy residues 1098 to 1129 (PCPT…VLAA) and 1137 to 1146 (SSGQSSVLSG). Residues Ser1104, Ser1109, Ser1111, and Ser1115 each carry the phosphoserine modification. Thr1119 carries the phosphothreonine modification. The segment covering 1204–1220 (KASTDGATATDRYNSYN) has biased composition (polar residues). Residues 1225–1235 (KATAAPTAASS) show a composition bias toward low complexity. Residues Ser1270 and Ser1276 each carry the phosphoserine modification.

Belongs to the suppressor of sable family. Interacts with WDR82.

The protein localises to the chromosome. Its function is as follows. RNA-binding protein that suppresses transcription of long non-coding RNAs (lncRNAs). LncRNAs are defined as transcripts more than 200 nucleotides that are not translated into protein. Together with WDR82, part of a transcription termination checkpoint that promotes transcription termination of lncRNAs and their subsequent degradation by the exosome. The transcription termination checkpoint is activated by the inefficiently spliced first exon of lncRNAs. The sequence is that of Zinc finger CCCH domain-containing protein 4 from Mus musculus (Mouse).